Reading from the N-terminus, the 64-residue chain is Large ribosomal subunit protein bL35 (64 aa).

Belongs to the bacterial ribosomal protein bL35 family.

The sequence is that of Large ribosomal subunit protein bL35 from Coxiella burnetii (strain RSA 493 / Nine Mile phase I).